The following is a 71-amino-acid chain: Large ribosomal subunit protein bL31 (71 aa).

Zn(2+) is bound by residues Cys-16, Cys-18, Cys-37, and Cys-40.

It belongs to the bacterial ribosomal protein bL31 family. Type A subfamily. As to quaternary structure, part of the 50S ribosomal subunit. It depends on Zn(2+) as a cofactor.

Binds the 23S rRNA. This Pseudomonas putida (strain W619) protein is Large ribosomal subunit protein bL31.